We begin with the raw amino-acid sequence, 300 residues long: Ribosomal RNA small subunit methyltransferase H (300 aa).

S-adenosyl-L-methionine-binding positions include 46 to 48 (GGH), Asp-65, Phe-92, Asp-107, and Gln-114.

Belongs to the methyltransferase superfamily. RsmH family.

It is found in the cytoplasm. The enzyme catalyses cytidine(1402) in 16S rRNA + S-adenosyl-L-methionine = N(4)-methylcytidine(1402) in 16S rRNA + S-adenosyl-L-homocysteine + H(+). Functionally, specifically methylates the N4 position of cytidine in position 1402 (C1402) of 16S rRNA. The sequence is that of Ribosomal RNA small subunit methyltransferase H from Prochlorococcus marinus (strain AS9601).